A 168-amino-acid chain; its full sequence is MLPAALLRHPGLRRLVLQARTYAQAAASPAPAAGPGQMSFTFASPTQVFFDGANVRQVDVPTLTGAFGILASHVPTLQVLRPGLVMVHAEDGTTTKYFVSSGSVTVNADSSVQLLAEEVVTLDMLDLGAARANLEKAQSELSGAADEAARAEIQIRIEANEALVKALE.

The N-terminal 22 residues, methionine 1–tyrosine 22, are a transit peptide targeting the mitochondrion. N6-acetyllysine; alternate is present on residues lysine 136 and lysine 165. 2 positions are modified to N6-succinyllysine; alternate: lysine 136 and lysine 165.

The protein belongs to the ATPase epsilon chain family. Component of the ATP synthase complex composed at least of ATP5F1A/subunit alpha, ATP5F1B/subunit beta, ATP5MC1/subunit c (homooctomer), MT-ATP6/subunit a, MT-ATP8/subunit 8, ATP5ME/subunit e, ATP5MF/subunit f, ATP5MG/subunit g, ATP5MK/subunit k, ATP5MJ/subunit j, ATP5F1C/subunit gamma, ATP5F1D/subunit delta, ATP5F1E/subunit epsilon, ATP5PF/subunit F6, ATP5PB/subunit b, ATP5PD/subunit d, ATP5PO/subunit OSCP. ATP synthase complex consists of a soluble F(1) head domain (subunits alpha(3) and beta(3)) - the catalytic core - and a membrane F(0) domain - the membrane proton channel (subunits c, a, 8, e, f, g, k and j). These two domains are linked by a central stalk (subunits gamma, delta, and epsilon) rotating inside the F1 region and a stationary peripheral stalk (subunits F6, b, d, and OSCP). Component of a complex composed at least by ATPIF1, ATP5F1A, ATP5F1B, ATP5F1C AND ATP5F1E.

The protein localises to the mitochondrion. Its subcellular location is the mitochondrion inner membrane. Subunit delta, of the mitochondrial membrane ATP synthase complex (F(1)F(0) ATP synthase or Complex V) that produces ATP from ADP in the presence of a proton gradient across the membrane which is generated by electron transport complexes of the respiratory chain. ATP synthase complex consist of a soluble F(1) head domain - the catalytic core - and a membrane F(1) domain - the membrane proton channel. These two domains are linked by a central stalk rotating inside the F(1) region and a stationary peripheral stalk. During catalysis, ATP synthesis in the catalytic domain of F(1) is coupled via a rotary mechanism of the central stalk subunits to proton translocation. In vivo, can only synthesize ATP although its ATP hydrolase activity can be activated artificially in vitro. With the central stalk subunit gamma, is essential for the biogenesis of F(1) catalytic part of the ATP synthase complex namely in the formation of F1 assembly intermediate. This chain is ATP synthase F(1) complex subunit delta, mitochondrial, found in Rattus norvegicus (Rat).